Here is a 1169-residue protein sequence, read N- to C-terminus: RecBCD enzyme subunit RecB (1169 aa).

One can recognise a UvrD-like helicase ATP-binding domain in the interval 1–436 (MNKILEKIQN…IVLKINHRSS (436 aa)). The interval 1 to 839 (MNKILEKIQN…LLEIAKIFTI (839 aa)) is DNA-binding and helicase activity, interacts with RecC. Residue 18–25 (ASAGTGKT) coordinates ATP. One can recognise a UvrD-like helicase C-terminal domain in the interval 459–746 (IEKIDFTNSL…ELMTIHKSKG (288 aa)). Residues 883–1169 (KEYTSSFSSL…ILELGIKRHL (287 aa)) form a nuclease activity, interacts with RecD and RecA region. Mg(2+) contacts are provided by His-939, Asp-1052, and Asp-1065. Asp-1065 serves as the catalytic For nuclease activity.

It belongs to the helicase family. UvrD subfamily. In terms of assembly, heterotrimer of RecB, RecC and RecD. All subunits contribute to DNA-binding. Interacts with RecA. It depends on Mg(2+) as a cofactor.

It carries out the reaction Exonucleolytic cleavage (in the presence of ATP) in either 5'- to 3'- or 3'- to 5'-direction to yield 5'-phosphooligonucleotides.. It catalyses the reaction Couples ATP hydrolysis with the unwinding of duplex DNA by translocating in the 3'-5' direction.. The catalysed reaction is ATP + H2O = ADP + phosphate + H(+). Functionally, a helicase/nuclease that prepares dsDNA breaks (DSB) for recombinational DNA repair. Binds to DSBs and unwinds DNA via a highly rapid and processive ATP-dependent bidirectional helicase activity. Unwinds dsDNA until it encounters a Chi (crossover hotspot instigator) sequence from the 3' direction. Cuts ssDNA a few nucleotides 3' to the Chi site. The properties and activities of the enzyme are changed at Chi. The Chi-altered holoenzyme produces a long 3'-ssDNA overhang and facilitates RecA-binding to the ssDNA for homologous DNA recombination and repair. Holoenzyme degrades any linearized DNA that is unable to undergo homologous recombination. In the holoenzyme this subunit contributes ATPase, 3'-5' helicase, exonuclease activity and loads RecA onto ssDNA. The polypeptide is RecBCD enzyme subunit RecB (Borreliella burgdorferi (strain ATCC 35210 / DSM 4680 / CIP 102532 / B31) (Borrelia burgdorferi)).